The chain runs to 289 residues: NAD kinase (289 aa).

Aspartate 82 functions as the Proton acceptor in the catalytic mechanism. Residues 82-83 (DG), arginine 87, 150-151 (NE), lysine 161, arginine 178, aspartate 180, 191-196 (TAYAMS), alanine 215, and glutamine 250 contribute to the NAD(+) site.

Belongs to the NAD kinase family. The cofactor is a divalent metal cation.

It localises to the cytoplasm. The catalysed reaction is NAD(+) + ATP = ADP + NADP(+) + H(+). Functionally, involved in the regulation of the intracellular balance of NAD and NADP, and is a key enzyme in the biosynthesis of NADP. Catalyzes specifically the phosphorylation on 2'-hydroxyl of the adenosine moiety of NAD to yield NADP. The protein is NAD kinase of Methanosarcina mazei (strain ATCC BAA-159 / DSM 3647 / Goe1 / Go1 / JCM 11833 / OCM 88) (Methanosarcina frisia).